Consider the following 396-residue polypeptide: Flavohemoprotein (396 aa).

The region spanning 1 to 136 is the Globin domain; sequence MLDNQTIATV…LADIFINREE (136 aa). Histidine 85 lines the heme b pocket. Residues tyrosine 95 and glutamate 135 each act as charge relay system in the active site. The interval 147-396 is reductase; sequence GGWRGLRPFR…YECFGPHKVI (250 aa). The region spanning 150–255 is the FAD-binding FR-type domain; sequence RGLRPFRINR…TAPRGDFFLD (106 aa). FAD is bound by residues tyrosine 188 and 204–207; that span reads RQYS. Residue 268-273 participates in NADP(+) binding; the sequence is GVGLTP. An FAD-binding site is contributed by 389–392; sequence CFGP.

It belongs to the globin family. Two-domain flavohemoproteins subfamily. In the C-terminal section; belongs to the flavoprotein pyridine nucleotide cytochrome reductase family. It depends on heme b as a cofactor. The cofactor is FAD.

The catalysed reaction is 2 nitric oxide + NADPH + 2 O2 = 2 nitrate + NADP(+) + H(+). It carries out the reaction 2 nitric oxide + NADH + 2 O2 = 2 nitrate + NAD(+) + H(+). Functionally, is involved in NO detoxification in an aerobic process, termed nitric oxide dioxygenase (NOD) reaction that utilizes O(2) and NAD(P)H to convert NO to nitrate, which protects the bacterium from various noxious nitrogen compounds. Therefore, plays a central role in the inducible response to nitrosative stress. This Photorhabdus laumondii subsp. laumondii (strain DSM 15139 / CIP 105565 / TT01) (Photorhabdus luminescens subsp. laumondii) protein is Flavohemoprotein.